A 184-amino-acid chain; its full sequence is Cbp/p300-interacting transactivator 4 (184 aa).

Residues 18 to 28 (PSAAAAHGPHA) are compositionally biased toward low complexity. Disordered regions lie at residues 18–67 (PSAA…YGAF) and 94–128 (TPYP…PAHA). Residues 104-126 (PNAPGGPPGPQPAPSAAAPPPPA) are compositionally biased toward pro residues.

This sequence belongs to the CITED family. As to quaternary structure, interacts via its C-terminal region with the CH1 domain of CREBBP and EP300. Interacts with all TFAP2/AP-2 isoforms. In terms of tissue distribution, expressed in most tissues examined with highest levels of expression in heart, liver, skeletal muscle and pancreas. Also expressed in bladder cell line ECV-304 and in various breast cancer cell lines. Also detected in both in situ and invasive breast tumors where its expression is down-regulated and mostly restricted to the cytoplasm of malignant epithelium. Down-regulation of expression is associated with elevated levels of HIF1A and increased tumor growth and angiogenesis.

The protein localises to the nucleus. Its subcellular location is the cytoplasm. Its function is as follows. Acts as a transcriptional coactivator for TFAP2/AP-2. Enhances estrogen-dependent transactivation mediated by estrogen receptors. May function as an inhibitor of transactivation by HIF1A by disrupting HIF1A interaction with CREBBP. May be involved in regulation of gene expression during development and differentiation of blood cells, endothelial cells and mammary epithelial cells. This is Cbp/p300-interacting transactivator 4 from Homo sapiens (Human).